A 498-amino-acid polypeptide reads, in one-letter code: 3-octaprenyl-4-hydroxybenzoate carboxy-lyase (498 aa).

Residue Asn175 participates in Mn(2+) binding. Residues 178 to 180 (IYR), 192 to 194 (RWL), and 197 to 198 (RG) contribute to the prenylated FMN site. Mn(2+) is bound at residue Glu241. Asp290 functions as the Proton donor in the catalytic mechanism.

It belongs to the UbiD family. In terms of assembly, homohexamer. Prenylated FMN is required as a cofactor. Requires Mn(2+) as cofactor.

The protein resides in the cell membrane. The catalysed reaction is a 4-hydroxy-3-(all-trans-polyprenyl)benzoate + H(+) = a 2-(all-trans-polyprenyl)phenol + CO2. Its pathway is cofactor biosynthesis; ubiquinone biosynthesis. In terms of biological role, catalyzes the decarboxylation of 3-octaprenyl-4-hydroxy benzoate to 2-octaprenylphenol, an intermediate step in ubiquinone biosynthesis. This chain is 3-octaprenyl-4-hydroxybenzoate carboxy-lyase, found in Yersinia pestis bv. Antiqua (strain Antiqua).